Consider the following 292-residue polypeptide: Pyruvate formate-lyase 2-activating enzyme (292 aa).

A Radical SAM core domain is found at 33-287 (NDGEGIRTVV…REMAERAGLQ (255 aa)). Cys-47, Cys-51, and Cys-54 together coordinate [4Fe-4S] cluster. S-adenosyl-L-methionine is bound at residue 53–55 (WCA). A 4Fe-4S ferredoxin-type domain is found at 62–96 (GKIQTVRREAKCLHCAKCLRDADECPSGAFERIGR). S-adenosyl-L-methionine-binding positions include Gly-126, 175–177 (DLK), and His-247.

This sequence belongs to the organic radical-activating enzymes family. Requires [4Fe-4S] cluster as cofactor.

The protein localises to the cytoplasm. The catalysed reaction is glycyl-[formate C-acetyltransferase] + reduced [flavodoxin] + S-adenosyl-L-methionine = glycin-2-yl radical-[formate C-acetyltransferase] + semiquinone [flavodoxin] + 5'-deoxyadenosine + L-methionine + H(+). Functionally, activation of pyruvate formate-lyase 2 under anaerobic conditions by generation of an organic free radical, using S-adenosylmethionine and reduced flavodoxin as cosubstrates to produce 5'-deoxy-adenosine. The polypeptide is Pyruvate formate-lyase 2-activating enzyme (pflC) (Escherichia coli (strain K12)).